The chain runs to 133 residues: ATP synthase epsilon chain, chloroplastic (133 aa).

It belongs to the ATPase epsilon chain family. F-type ATPases have 2 components, CF(1) - the catalytic core - and CF(0) - the membrane proton channel. CF(1) has five subunits: alpha(3), beta(3), gamma(1), delta(1), epsilon(1). CF(0) has three main subunits: a, b and c.

It is found in the plastid. The protein localises to the chloroplast thylakoid membrane. Functionally, produces ATP from ADP in the presence of a proton gradient across the membrane. The sequence is that of ATP synthase epsilon chain, chloroplastic from Thalassiosira pseudonana (Marine diatom).